An 86-amino-acid chain; its full sequence is Large ribosomal subunit protein bL31 (86 aa).

Cys-16, Cys-18, Cys-38, and Cys-41 together coordinate Zn(2+).

Belongs to the bacterial ribosomal protein bL31 family. Type A subfamily. As to quaternary structure, part of the 50S ribosomal subunit. Zn(2+) is required as a cofactor.

In terms of biological role, binds the 23S rRNA. In Acidothermus cellulolyticus (strain ATCC 43068 / DSM 8971 / 11B), this protein is Large ribosomal subunit protein bL31.